The sequence spans 155 residues: Small ribosomal subunit protein uS7 (155 aa).

The protein belongs to the universal ribosomal protein uS7 family. As to quaternary structure, part of the 30S ribosomal subunit. Contacts proteins S9 and S11.

One of the primary rRNA binding proteins, it binds directly to 16S rRNA where it nucleates assembly of the head domain of the 30S subunit. Is located at the subunit interface close to the decoding center, probably blocks exit of the E-site tRNA. This chain is Small ribosomal subunit protein uS7, found in Ureaplasma parvum serovar 3 (strain ATCC 27815 / 27 / NCTC 11736).